A 799-amino-acid polypeptide reads, in one-letter code: Histidine biosynthesis trifunctional protein (799 aa).

Residues 1–229 are phosphoribosyl-AMP cyclohydrolase; that stretch reads MVLPILPLID…FIVEQENVGF (229 aa). Positions 230-312 are phosphoribosyl-ATP pyrophosphohydrolase; that stretch reads CHLETMSCFG…FYFALAKLVA (83 aa). Residues 313–799 form a histidinol dehydrogenase region; sequence NDVSLKDVEN…KLGLIPKDFQ (487 aa). Glutamine 618 and histidine 621 together coordinate Zn(2+). Active-site residues include glutamate 687 and histidine 688. Zn(2+) contacts are provided by aspartate 721 and histidine 780.

It in the C-terminal section; belongs to the histidinol dehydrogenase family. Zn(2+) is required as a cofactor.

The enzyme catalyses 1-(5-phospho-beta-D-ribosyl)-5'-AMP + H2O = 1-(5-phospho-beta-D-ribosyl)-5-[(5-phospho-beta-D-ribosylamino)methylideneamino]imidazole-4-carboxamide. The catalysed reaction is 1-(5-phospho-beta-D-ribosyl)-ATP + H2O = 1-(5-phospho-beta-D-ribosyl)-5'-AMP + diphosphate + H(+). It carries out the reaction L-histidinol + 2 NAD(+) + H2O = L-histidine + 2 NADH + 3 H(+). Its pathway is amino-acid biosynthesis; L-histidine biosynthesis; L-histidine from 5-phospho-alpha-D-ribose 1-diphosphate: step 2/9. It functions in the pathway amino-acid biosynthesis; L-histidine biosynthesis; L-histidine from 5-phospho-alpha-D-ribose 1-diphosphate: step 3/9. The protein operates within amino-acid biosynthesis; L-histidine biosynthesis; L-histidine from 5-phospho-alpha-D-ribose 1-diphosphate: step 9/9. In Saccharomyces cerevisiae (strain ATCC 204508 / S288c) (Baker's yeast), this protein is Histidine biosynthesis trifunctional protein.